Consider the following 473-residue polypeptide: Pyruvate kinase (473 aa).

Arg-32 is a binding site for substrate. Residues Asn-34, Ser-36, Asp-66, and Thr-67 each coordinate K(+). 34–37 (NFSH) provides a ligand contact to ATP. ATP is bound by residues Arg-73 and Lys-155. Mg(2+) is bound at residue Glu-221. Residues Gly-244, Asp-245, and Thr-277 each contribute to the substrate site. Asp-245 is a Mg(2+) binding site.

Belongs to the pyruvate kinase family. Homotetramer. The cofactor is Mg(2+). K(+) serves as cofactor.

It catalyses the reaction pyruvate + ATP = phosphoenolpyruvate + ADP + H(+). It participates in carbohydrate degradation; glycolysis; pyruvate from D-glyceraldehyde 3-phosphate: step 5/5. This chain is Pyruvate kinase (pyk), found in Clostridium acetobutylicum (strain ATCC 824 / DSM 792 / JCM 1419 / IAM 19013 / LMG 5710 / NBRC 13948 / NRRL B-527 / VKM B-1787 / 2291 / W).